The primary structure comprises 446 residues: Chromosomal replication initiator protein DnaA (446 aa).

A domain I, interacts with DnaA modulators region spans residues 1 to 72; that stretch reads MKNISDLWNQ…ADTIYDLTGE (72 aa). A domain II region spans residues 72–109; the sequence is EELSIKFVIPQNQNEEDFMPKSPIKKMSKEEPADFPQN. Residues 110–326 are domain III, AAA+ region; it reads MLNPKYTFDT…GALIRVVAYS (217 aa). ATP-binding residues include Gly-154, Gly-156, Lys-157, and Thr-158. The tract at residues 327–446 is domain IV, binds dsDNA; that stretch reads SLINKDINAD…QIKEIKEQLR (120 aa).

Belongs to the DnaA family. As to quaternary structure, oligomerizes as a right-handed, spiral filament on DNA at oriC.

The protein localises to the cytoplasm. Functionally, plays an essential role in the initiation and regulation of chromosomal replication. ATP-DnaA binds to the origin of replication (oriC) to initiate formation of the DNA replication initiation complex once per cell cycle. Binds the DnaA box (a 9 base pair repeat at the origin) and separates the double-stranded (ds)DNA. Forms a right-handed helical filament on oriC DNA; dsDNA binds to the exterior of the filament while single-stranded (ss)DNA is stabiized in the filament's interior. The ATP-DnaA-oriC complex binds and stabilizes one strand of the AT-rich DNA unwinding element (DUE), permitting loading of DNA polymerase. After initiation quickly degrades to an ADP-DnaA complex that is not apt for DNA replication. Binds acidic phospholipids. The sequence is that of Chromosomal replication initiator protein DnaA from Bacillus licheniformis (strain ATCC 14580 / DSM 13 / JCM 2505 / CCUG 7422 / NBRC 12200 / NCIMB 9375 / NCTC 10341 / NRRL NRS-1264 / Gibson 46).